Consider the following 855-residue polypeptide: Inactive rhomboid protein 1 (855 aa).

The interval methionine 1 to serine 36 is disordered. Over methionine 1 to threonine 411 the chain is Cytoplasmic. Phosphoserine occurs at positions 76 and 176. Residues threonine 180 and threonine 183 each carry the phosphothreonine modification. The residue at position 390 (serine 390) is a Phosphoserine. The helical transmembrane segment at phenylalanine 412–phenylalanine 432 threads the bilayer. At serine 433–arginine 655 the chain is on the lumenal side. Asparagine 583 carries N-linked (GlcNAc...) asparagine glycosylation. Residues leucine 656–glutamine 676 traverse the membrane as a helical segment. At methionine 677–arginine 691 the chain is on the cytoplasmic side. Residues isoleucine 692–proline 712 traverse the membrane as a helical segment. Residues tyrosine 713–arginine 714 lie on the Lumenal side of the membrane. Residues alanine 715–phenylalanine 735 form a helical membrane-spanning segment. The Cytoplasmic portion of the chain corresponds to glutamine 736–arginine 746. Residues alanine 747–isoleucine 767 traverse the membrane as a helical segment. Over aspartate 768–histidine 772 the chain is Lumenal. The chain crosses the membrane as a helical span at residues isoleucine 773–glycine 793. At lysine 794–glutamine 803 the chain is on the cytoplasmic side. Residues isoleucine 804–phenylalanine 824 form a helical membrane-spanning segment. Over tyrosine 825–histidine 855 the chain is Lumenal.

It belongs to the peptidase S54 family. Homodimer, or homooligomer. Interacts with TGFA and HBEGF. Interacts with EGF; may retain EGF in the endoplasmic reticulum and regulates its degradation through the endoplasmic reticulum-associated degradation (ERAD). Interacts (via cytoplasmic N-terminus) with FRMD8/iTAP; this interaction leads to mutual protein stabilization. Interacts with ADAM17/TACE.

It is found in the endoplasmic reticulum membrane. The protein localises to the golgi apparatus membrane. Regulates ADAM17 protease, a sheddase of the epidermal growth factor (EGF) receptor ligands and TNF, thereby plays a role in sleep, cell survival, proliferation, migration and inflammation. Does not exhibit any protease activity on its own. This is Inactive rhomboid protein 1 (RHBDF1) from Papio anubis (Olive baboon).